Reading from the N-terminus, the 293-residue chain is Ankyrin repeat and SOCS box protein 11 (293 aa).

ANK repeat units follow at residues 36–65 (DDRT…NVGM), 69–98 (DGIT…DANA), 102–131 (DGAT…AHHP), 134–163 (LLCS…NVDM), 167–196 (SVGT…DVQC), 199–228 (GLDT…DRTS), and 232–259 (EGKT…SLSQ). Residues 244 to 293 (SIKHLLQTAGTCSLSQLCRWCIRRSLGQKGLNKTKTLCLPHMLHNYLLYH) enclose the SOCS box domain.

The protein belongs to the ankyrin SOCS box (ASB) family. In terms of assembly, substrate-recognition component of the ECS(ASB11) complex, composed of asb11, cul5, elob, eloc and rnf7/rbx2. As to expression, expressed in the developing nervous system: localizes to neural plate margins and is abutting the proneuronal zone.

It is found in the endoplasmic reticulum. The protein operates within protein modification; protein ubiquitination. Its function is as follows. Substrate-recognition component of a cullin-5-RING E3 ubiquitin-protein ligase complex (ECS complex, also named CRL5 complex), which mediates the ubiquitination and subsequent proteasomal degradation of target proteins. Acts as a regulator of the neuronal progenitor compartment size by maintaining the neural precursors in the proliferating undifferentiated state. The ECS(ASB11) complex acts as a positive regulator of Notch signaling pathway by mediating ubiquitination and degradation of DeltaA (dla). Also acts as a regulator of regenerative myogenesis. The sequence is that of Ankyrin repeat and SOCS box protein 11 from Danio rerio (Zebrafish).